A 902-amino-acid polypeptide reads, in one-letter code: Protein translocase subunit SecA (902 aa).

ATP-binding positions include Q87, 105-109, and D512; that span reads GEGKT. Positions 847–902 are disordered; that stretch reads DAERLARQQQLSHLDDQSAAAQEMASQTGDRKIGRNDPCPCGSGKKYKQCHGRLNA. Zn(2+) is bound by residues C885, C887, C896, and H897. Over residues 891-902 the composition is skewed to basic residues; the sequence is KKYKQCHGRLNA.

Belongs to the SecA family. Monomer and homodimer. Part of the essential Sec protein translocation apparatus which comprises SecA, SecYEG and auxiliary proteins SecDF-YajC and YidC. Zn(2+) is required as a cofactor.

The protein localises to the cell inner membrane. Its subcellular location is the cytoplasm. It catalyses the reaction ATP + H2O + cellular proteinSide 1 = ADP + phosphate + cellular proteinSide 2.. Part of the Sec protein translocase complex. Interacts with the SecYEG preprotein conducting channel. Has a central role in coupling the hydrolysis of ATP to the transfer of proteins into and across the cell membrane, serving both as a receptor for the preprotein-SecB complex and as an ATP-driven molecular motor driving the stepwise translocation of polypeptide chains across the membrane. This Edwardsiella ictaluri (strain 93-146) protein is Protein translocase subunit SecA.